The chain runs to 367 residues: Regulator of fusion ref-1 (367 aa).

Over residues 1-10 the composition is skewed to pro residues; sequence MVLISTPPPA. The disordered stretch occupies residues 1-24; sequence MVLISTPPPAYAHNRKTSQEKKRR. A basic motif 1 region spans residues 11–24; the sequence is YAHNRKTSQEKKRR. Residues 11–63 enclose the bHLH 1 domain; that stretch reads YAHNRKTSQEKKRRDEINAKIKELQLLIQNESDNEKMTQGDVLNRAVEVVSRM. Positions 25–63 are helix-loop-helix motif 1; that stretch reads DEINAKIKELQLLIQNESDNEKMTQGDVLNRAVEVVSRM. Disordered regions lie at residues 133–177 and 313–367; these read RSES…RRDR and ATSP…RPWE. Over residues 141 to 157 the composition is skewed to low complexity; the sequence is SSMSYRSQSSSPSTSES. Positions 161–177 are enriched in basic and acidic residues; the sequence is IDRKEVKKNREQDRRDR. A basic motif 2 region spans residues 162-175; sequence DRKEVKKNREQDRR. A bHLH 2 domain is found at 162–219; the sequence is DRKEVKKNREQDRRDRQGEAFDALKNFIIENKLMTSHQVEKMQRLNTLDIIIAYIQNK. The tract at residues 176 to 219 is helix-loop-helix motif 2; that stretch reads DRQGEAFDALKNFIIENKLMTSHQVEKMQRLNTLDIIIAYIQNK. Over residues 313–354 the composition is skewed to low complexity; that stretch reads ATSPKSQQSPSYSLDSPPPSSDTSSSSIETPSTPNENSNSNP. Positions 356-367 are enriched in basic residues; sequence ASRKSKLFRPWE.

Interacts with unc-37.

It localises to the nucleus. Its function is as follows. Probable transcription factor. Binds 5'-TGCCACGTGTCCA-3' in vitro, probably via the E-box motif 5'-CA[TC][AG]TG-3'. Acts in embryonic development in a Notch-dependent manner, perhaps as a direct target of transcriptional regulator lag-1 in the Notch signaling pathway. Also acts in embryonic development in a Notch-independent manner. Plays a role in both Notch-dependent and -independent pathways in the execution of neuronal lineage decisions in the embryo. Also involved in regulating cell fate leading to formation of neuronal structures known as postdeirids. Involved in the pattern of cell fusion with a large syncytium known as hyp-7, during larval development, in hermaphrodites. Plays a role in regulating the activity of homeobox protein mab-5 in Pn.p cells. The sequence is that of Regulator of fusion ref-1 from Caenorhabditis elegans.